We begin with the raw amino-acid sequence, 1031 residues long: GTPase-activating protein DDB_G0291510 (1031 aa).

Positions 18 to 48 (VEKGDIDENNSGSINNRPLSPTLFSSNSSNN) are disordered. Residues 26–41 (NNSGSINNRPLSPTLF) are compositionally biased toward polar residues. Residues 186–404 (FKDLEQTQTE…RTFKDQLESI (219 aa)) form the Rap-GAP domain. The CNH domain maps to 471–881 (NEKINCLDVV…LSNDDCNLDN (411 aa)). The disordered stretch occupies residues 920-950 (NNNYNNNGNNSNGGNNNNNNNNNNGCNNSLI).

This is GTPase-activating protein DDB_G0291510 from Dictyostelium discoideum (Social amoeba).